A 616-amino-acid polypeptide reads, in one-letter code: Protein LNK1 (616 aa).

Disordered regions lie at residues 72–112 (GKNP…HGFN), 361–398 (ESKSGIKSENKPSPSSASNESYTSNHAQSIESLQGPTV), 410–434 (ANLLPGQDMPPSFAANTKKSSKTDS), and 567–616 (SSLS…SDNN). Over residues 371–395 (KPSPSSASNESYTSNHAQSIESLQG) the composition is skewed to polar residues. A compositionally biased stretch (low complexity) spans 567-577 (SSLSSDNNVLS). The span at 594–608 (RIEKQEETTELRPEA) shows a compositional bias: basic and acidic residues.

Interacts with CCA1, LHY, REV4 and REV8, but not with PRR7 or PRR9. Expressed in roots, stems, leaves, seedlings, cotyledons, inflorescences and siliques. Highest expression in root tips, young leaves and vasculatur tissues.

It localises to the nucleus. In terms of biological role, transcriptional coactivator necessary for expression of the clock genes PRR5 and TOC1. Antagonizes REV8 function in the regulation of anthocyanin accumulation. Involved in red light input to the clock. Activates clock-controlled genes with afternoon peak. Mediates light inhibition of hypocotyl elongation. This chain is Protein LNK1, found in Arabidopsis thaliana (Mouse-ear cress).